Consider the following 77-residue polypeptide: DNA-directed RNA polymerase subunit omega (77 aa).

The protein belongs to the RNA polymerase subunit omega family. In cyanobacteria the RNAP catalytic core is composed of 2 alpha, 1 beta, 1 beta', 1 gamma and 1 omega subunit. When a sigma factor is associated with the core the holoenzyme is formed, which can initiate transcription.

It carries out the reaction RNA(n) + a ribonucleoside 5'-triphosphate = RNA(n+1) + diphosphate. Its function is as follows. Promotes RNA polymerase assembly. Latches the N- and C-terminal regions of the beta' subunit thereby facilitating its interaction with the beta and alpha subunits. The chain is DNA-directed RNA polymerase subunit omega from Thermosynechococcus vestitus (strain NIES-2133 / IAM M-273 / BP-1).